The chain runs to 486 residues: Malonate-semialdehyde dehydrogenase 2 (486 aa).

The NAD(+) site is built by phenylalanine 154, lysine 178, glutamate 181, arginine 182, and serine 231. Cysteine 286 (nucleophile) is an active-site residue. Glutamate 386 contacts NAD(+).

The protein belongs to the aldehyde dehydrogenase family. IolA subfamily. Homotetramer.

The enzyme catalyses 3-oxopropanoate + NAD(+) + CoA + H2O = hydrogencarbonate + acetyl-CoA + NADH + H(+). It carries out the reaction 2-methyl-3-oxopropanoate + NAD(+) + CoA + H2O = propanoyl-CoA + hydrogencarbonate + NADH + H(+). The protein operates within polyol metabolism; myo-inositol degradation into acetyl-CoA; acetyl-CoA from myo-inositol: step 7/7. Catalyzes the oxidation of malonate semialdehyde (MSA) and methylmalonate semialdehyde (MMSA) into acetyl-CoA and propanoyl-CoA, respectively. Is involved in a myo-inositol catabolic pathway. Bicarbonate, and not CO2, is the end-product of the enzymatic reaction. The protein is Malonate-semialdehyde dehydrogenase 2 of Oceanobacillus iheyensis (strain DSM 14371 / CIP 107618 / JCM 11309 / KCTC 3954 / HTE831).